The following is a 370-amino-acid chain: Propane 2-monooxygenase, reductase component (370 aa).

The span at 1 to 14 (MAPRPLRRHPPLHH) shows a compositional bias: basic residues. Residues 1-21 (MAPRPLRRHPPLHHSFHESRR) form a disordered region. The 91-residue stretch at 28-118 (HRINFEPVDI…DCTIELLNFD (91 aa)) folds into the 2Fe-2S ferredoxin-type domain. 4 residues coordinate [2Fe-2S] cluster: Cys62, Cys67, Cys70, and Cys102. Residues 128–229 (IQDVRTRVTR…TGPYGSFTIK (102 aa)) form the FAD-binding FR-type domain.

The protein belongs to the TmoA/XamoA family. As to quaternary structure, the propane 2-monooxygenase multicomponent enzyme system is composed of an electron transfer component and a monooxygenase component interacting with the effector protein PrmD. The electron transfer component is composed of a reductase (PrmB), and the monooxygenase component is formed by a large subunit (PrmA) and a small subunit (PrmC). FAD is required as a cofactor. Requires [2Fe-2S] cluster as cofactor.

In terms of biological role, reductase component of the propane 2-monooxygenase multicomponent enzyme system which is involved in the degradation of propane via the O2-dependent hydroxylation of propane. Reductase catalyzes the transfer of electrons from NADH or NADPH to monooxygenase. This is Propane 2-monooxygenase, reductase component from Rhodococcus jostii (strain RHA1).